The primary structure comprises 114 residues: uncharacterized protein (114 aa).

Positions 1–19 are cleaved as a signal peptide; sequence MKASYLVLIFISIFSMAQA. Phosphoserine is present on Ser-41.

It belongs to the protease inhibitor I9 family.

This is an uncharacterized protein from Saccharomyces cerevisiae (strain ATCC 204508 / S288c) (Baker's yeast).